Reading from the N-terminus, the 543-residue chain is DM7 family protein GG19680 (543 aa).

Basic and acidic residues predominate over residues G415–S430. The tract at residues G415–Q443 is disordered.

It belongs to the DM7 family.

The sequence is that of DM7 family protein GG19680 from Drosophila erecta (Fruit fly).